Here is a 179-residue protein sequence, read N- to C-terminus: Large ribosomal subunit protein uL5 (179 aa).

Belongs to the universal ribosomal protein uL5 family. Part of the 50S ribosomal subunit; part of the 5S rRNA/L5/L18/L25 subcomplex. Contacts the 5S rRNA and the P site tRNA. Forms a bridge to the 30S subunit in the 70S ribosome.

In terms of biological role, this is one of the proteins that bind and probably mediate the attachment of the 5S RNA into the large ribosomal subunit, where it forms part of the central protuberance. In the 70S ribosome it contacts protein S13 of the 30S subunit (bridge B1b), connecting the 2 subunits; this bridge is implicated in subunit movement. Contacts the P site tRNA; the 5S rRNA and some of its associated proteins might help stabilize positioning of ribosome-bound tRNAs. The sequence is that of Large ribosomal subunit protein uL5 from Marinomonas sp. (strain MWYL1).